The primary structure comprises 382 residues: Glutamyl-tRNA reductase (382 aa).

Substrate-binding positions include 38–41 (TCNR), S85, 90–92 (ENQ), and Q96. The active-site Nucleophile is C39. 164–169 (GAGEMG) lines the NADP(+) pocket.

The protein belongs to the glutamyl-tRNA reductase family. Homodimer.

The catalysed reaction is (S)-4-amino-5-oxopentanoate + tRNA(Glu) + NADP(+) = L-glutamyl-tRNA(Glu) + NADPH + H(+). The protein operates within porphyrin-containing compound metabolism; protoporphyrin-IX biosynthesis; 5-aminolevulinate from L-glutamyl-tRNA(Glu): step 1/2. Its function is as follows. Catalyzes the NADPH-dependent reduction of glutamyl-tRNA(Glu) to glutamate 1-semialdehyde (GSA). This chain is Glutamyl-tRNA reductase, found in Methanococcus maripaludis (strain C5 / ATCC BAA-1333).